The primary structure comprises 580 residues: Benzoate--CoA ligase, peroxisomal (580 aa).

Residues 578-580 (SRL) carry the Microbody targeting signal motif.

It belongs to the ATP-dependent AMP-binding enzyme family.

It is found in the peroxisome. It carries out the reaction benzoate + ATP + CoA = benzoyl-CoA + AMP + diphosphate. Its function is as follows. Benzoate--CoA ligase involved in benzoyloxyglucosinolate biosynthesis in seeds. Glucosinolates are secondary metabolites involved in pathogen and insect defense of cruciferous plants. The polypeptide is Benzoate--CoA ligase, peroxisomal (AAE20) (Arabidopsis thaliana (Mouse-ear cress)).